The sequence spans 289 residues: 4-hydroxybenzoate octaprenyltransferase (289 aa).

A run of 9 helical transmembrane segments spans residues I19–L39, I42–I62, G85–I105, V107–L127, F134–F154, A165–L185, I211–F231, S233–Y253, and F265–I285.

This sequence belongs to the UbiA prenyltransferase family. Mg(2+) serves as cofactor.

It localises to the cell inner membrane. It catalyses the reaction all-trans-octaprenyl diphosphate + 4-hydroxybenzoate = 4-hydroxy-3-(all-trans-octaprenyl)benzoate + diphosphate. It participates in cofactor biosynthesis; ubiquinone biosynthesis. Functionally, catalyzes the prenylation of para-hydroxybenzoate (PHB) with an all-trans polyprenyl group. Mediates the second step in the final reaction sequence of ubiquinone-8 (UQ-8) biosynthesis, which is the condensation of the polyisoprenoid side chain with PHB, generating the first membrane-bound Q intermediate 3-octaprenyl-4-hydroxybenzoate. The protein is 4-hydroxybenzoate octaprenyltransferase of Francisella tularensis subsp. holarctica (strain FTNF002-00 / FTA).